A 372-amino-acid polypeptide reads, in one-letter code: tRNA-specific 2-thiouridylase MnmA (372 aa).

ATP is bound by residues 16 to 23 and Met42; that span reads GMSGGVDS. An interaction with target base in tRNA region spans residues 102-104; sequence NPD. Cys107 functions as the Nucleophile in the catalytic mechanism. A disulfide bridge connects residues Cys107 and Cys205. Gly132 serves as a coordination point for ATP. The tract at residues 155–157 is interaction with tRNA; the sequence is KDQ. Cys205 serves as the catalytic Cysteine persulfide intermediate. Residues 317–318 are interaction with tRNA; that stretch reads RY.

This sequence belongs to the MnmA/TRMU family.

It localises to the cytoplasm. The catalysed reaction is S-sulfanyl-L-cysteinyl-[protein] + uridine(34) in tRNA + AH2 + ATP = 2-thiouridine(34) in tRNA + L-cysteinyl-[protein] + A + AMP + diphosphate + H(+). In terms of biological role, catalyzes the 2-thiolation of uridine at the wobble position (U34) of tRNA, leading to the formation of s(2)U34. The polypeptide is tRNA-specific 2-thiouridylase MnmA (Shewanella putrefaciens (strain CN-32 / ATCC BAA-453)).